The primary structure comprises 44 residues: KLMKQGGAALEGSALANGRALSAGSPPVPPGWNRIPPLGRAQEE.

A disordered region spans residues 19–44 (RALSAGSPPVPPGWNRIPPLGRAQEE).

The protein belongs to the distal-less homeobox family. As to quaternary structure, interacts with SMAD4 (via homeobox DNA-binding domain). Interacts (via homeobox DNA-binding domain) with POU4F2; this interaction suppresses DLX1-mediated transcriptional activity in postnatal retina and enhances retinal ganglion cell (RGC) differentiation.

It is found in the nucleus. In terms of biological role, plays a role as a transcriptional activator or repressor. Inhibits several cytokine signaling pathways, such as TGFB1, activin-A/INHBA and BMP4 by interfering with the transcriptional stimulatory activity of transcription factors, such as MSX2, FAST2, SMAD2 and SMAD3 during hematopoietic cell differentiation. Plays a role in terminal differentiation of interneurons, such as amacrine and bipolar cells in the developing retina. Likely to play a regulatory role in the development of the ventral forebrain. May play a role in craniofacial patterning and morphogenesis and may be involved in the early development of diencephalic subdivisions. The protein is Homeobox protein DLX-1 (Dlx1) of Rattus norvegicus (Rat).